The sequence spans 626 residues: Dual specificity testis-specific protein kinase 1 (626 aa).

Residues 1–41 (MAGERPPLRGPGPGPGEVPGEGPPGPGGTGGGPGRGRPSSY) form a disordered region. A compositionally biased stretch (pro residues) spans 8-26 (LRGPGPGPGEVPGEGPPGP). The Protein kinase domain occupies 57–314 (FHCAEKIGAG…TEITQHLEWI (258 aa)). Residues 63–71 (IGAGFFSEV) and K86 contribute to the ATP site. Catalysis depends on D175, which acts as the Proton acceptor. At S220 the chain carries Phosphoserine; by autocatalysis. 3 disordered regions span residues 331 to 373 (HNQG…NWGD), 423 to 488 (ETLV…QLPL), and 529 to 564 (WAGEPWNRAQHSLPRAAALERTEPSPPPSAPREPDE). R338 is subject to Omega-N-methylarginine. Basic and acidic residues predominate over residues 348–357 (PDPRLSRSRS). Positions 419-524 (VTTPETLVQP…NNNPPAVVVN (106 aa)) are required for interaction with YWHAB. Over residues 476 to 485 (EPEPPGPAPQ) the composition is skewed to pro residues. Positions 527 to 624 (QGWAGEPWNR…PTPSLQLPGA (98 aa)) are required for interaction with PARVA. The interval 527-626 (QGWAGEPWNR…PSLQLPGARS (100 aa)) is required for interaction with SPRED1 and SPRY2. Required for TESK1-mediated dephosphorylation of SPRY2 and SPRY2 inhibition of ERK phosphorylation.

The protein belongs to the protein kinase superfamily. TKL Ser/Thr protein kinase family. As to quaternary structure, interacts (via both C- and N-termini) with SPRY4 (via C-terminus); the interaction inhibits TESK1 kinase activity. Interacts with TAOK1; the interaction inhibits TAOK1 kinase activity. Interacts (via C-terminus) with SPRED1 (via C-terminus); the interaction inhibits TESK1 kinase activity. Interacts (via C-terminus) with PARVA/PARVIN (via C-terminus); the interaction inhibits TESK1 kinase activity. Interacts with YWHAB/14-3-3 beta; the interaction is dependent on the phosphorylation of TESK1 Ser-437 and inhibits TESK1 kinase activity. Interacts with SPRY1, SPRY3 and SPRED2. Interacts (via C-terminus) with SPRY2 (via C-terminus); the interaction disrupts SPRY2 interaction with PPP2CA/PP2A-C, possibly by vesicular sequestration of SPRY2. Therefore dephosphorylation of SPRY2 by the serine/threonine-protein phosphatase 2A (PP2A) holoenzyme is lost, inhibiting its interaction with GRB2. Requires Mg(2+) as cofactor. Mn(2+) is required as a cofactor. In terms of processing, autophosphorylated on serine and tyrosine residues. In terms of tissue distribution, expressed in podocytes and renal tubular cells in the kidney (at protein level).

The protein resides in the cytoplasm. It is found in the perinuclear region. The protein localises to the cytoskeleton. It localises to the microtubule organizing center. Its subcellular location is the centrosome. The protein resides in the cell projection. It is found in the lamellipodium. It catalyses the reaction L-seryl-[protein] + ATP = O-phospho-L-seryl-[protein] + ADP + H(+). The catalysed reaction is L-threonyl-[protein] + ATP = O-phospho-L-threonyl-[protein] + ADP + H(+). It carries out the reaction L-tyrosyl-[protein] + ATP = O-phospho-L-tyrosyl-[protein] + ADP + H(+). Its activity is regulated as follows. Activated by autophosphorylation on Ser-220. Kinase activity is inhibited by SPRED1. Its function is as follows. Dual specificity protein kinase activity catalyzing autophosphorylation and phosphorylation of exogenous substrates on both serine/threonine and tyrosine residues. Regulates the cellular cytoskeleton by enhancing actin stress fiber formation via phosphorylation of cofilin and by preventing microtubule breakdown via inhibition of TAOK1/MARKK kinase activity. Inhibits podocyte motility via regulation of actin cytoskeletal dynamics and phosphorylation of CFL1. Positively regulates integrin-mediated cell spreading, via phosphorylation of cofilin. Suppresses ciliogenesis via multiple pathways; phosphorylation of CFL1, suppression of ciliary vesicle directional trafficking to the ciliary base, and by facilitating YAP1 nuclear localization where it acts as a transcriptional corepressor of the TEAD4 target genes AURKA and PLK1. Probably plays a central role at and after the meiotic phase of spermatogenesis. The polypeptide is Dual specificity testis-specific protein kinase 1 (TESK1) (Homo sapiens (Human)).